A 274-amino-acid polypeptide reads, in one-letter code: Mitochondrial S-adenosylmethionine carrier protein (274 aa).

Solcar repeat units lie at residues 4–77 (PGFV…VKWF), 86–168 (LTPM…LKAL), and 177–265 (VDSW…THSL). A run of 6 helical transmembrane segments spans residues 5 to 25 (GFVA…LILF), 49 to 69 (IYAG…AFFI), 85 to 105 (YLTP…ACLI), 142 to 162 (RGYK…FPLW), 182 to 202 (SAVC…PLDV), and 238 to 258 (FAGV…FLGA).

This sequence belongs to the mitochondrial carrier (TC 2.A.29) family. In terms of tissue distribution, widely expressed. Highly expressed in testis, with moderate expression in brain, heart, kidney, lung, skeletal muscle, pancreas, small intestine and liver, and low expression in spleen.

It is found in the mitochondrion inner membrane. The enzyme catalyses S-adenosyl-L-homocysteine(out) + S-adenosyl-L-methionine(in) = S-adenosyl-L-homocysteine(in) + S-adenosyl-L-methionine(out). Strongly inhibited by tannic acid and Bromocresol Purple. Its function is as follows. Mitochondrial S-adenosyl-L-methionine/S-adenosyl-L-homocysteine antiporter. Mediates the exchange of cytosolic S-adenosyl-L-methionine, the predominant methyl-group donor for macromolecule methylation processes, for mitochondrial S-adenosylhomocysteine(SAH), a by-product of methylation reactions. This is Mitochondrial S-adenosylmethionine carrier protein from Homo sapiens (Human).